A 238-amino-acid chain; its full sequence is Heme oxygenase 1 (238 aa).

It belongs to the heme oxygenase family.

The enzyme catalyses heme b + 3 reduced [NADPH--hemoprotein reductase] + 3 O2 = biliverdin IXalpha + CO + Fe(2+) + 3 oxidized [NADPH--hemoprotein reductase] + 3 H2O + H(+). Catalyzes the opening of the heme ring with the release of iron. Key enzyme in the synthesis of the chromophoric part of the photosynthetic antennae. Upon overexpression in E.coli with PCB:ferredoxin oxidoreductase, CpeS and either CpcB or PecB permits synthesis of phycocyanin-coupled CpcB or PecB. The protein is Heme oxygenase 1 (pbsA1) of Nostoc sp. (strain PCC 7120 / SAG 25.82 / UTEX 2576).